Consider the following 490-residue polypeptide: Prostaglandin E2 receptor EP4 subtype (490 aa).

Residues 1–19 (MSTPGVNASASLSPDRLNS) lie on the Extracellular side of the membrane. The N-linked (GlcNAc...) asparagine glycan is linked to N7. A helical transmembrane segment spans residues 20–43 (PVTIPAVMFIFGVVGNLVAIVVLC). Topologically, residues 44–55 (KSRKEQKETTFY) are cytoplasmic. The chain crosses the membrane as a helical span at residues 56–79 (TLVCGLAVTDLLGTLLVSPVTIAT). At 80–96 (YMKGQWPGGQPLCEYST) the chain is on the extracellular side. A disulfide bridge connects residues C92 and C170. A helical membrane pass occupies residues 97–115 (FILLFFSLSGLSIICAMSV). The Cytoplasmic portion of the chain corresponds to 116-135 (ERYLAINHAYFYSHYVDKRL). A helical transmembrane segment spans residues 136 to 160 (AGLTLFAVYASNVLFCALPNMGLGS). The Extracellular segment spans residues 161-184 (SRLQYPDTWCFIDWTTNVTAHAAY). The helical transmembrane segment at 185-211 (SYMYAGFSSFLILATVLCNVLVCGALL) threads the bilayer. The Cytoplasmic segment spans residues 212 to 269 (RMHRQFMRRTSLGTEQHHAAAAAVTSVASRGHPAASPALPRLSDFRRRRSFRRIAGAE). The chain crosses the membrane as a helical span at residues 270-297 (IQMVILLIATSLVVLICSIPLVVRVFVN). The Extracellular portion of the chain corresponds to 298-314 (QLYQPSLEREVSKNPDL). The helical transmembrane segment at 315–334 (QAIRIASVNPILDPWIYILL) threads the bilayer. Over 335–490 (RKTVLSKAIE…ETLNLSEKCI (156 aa)) the chain is Cytoplasmic. Positions 359–378 (ERSGQHCSDSQRTSSAMSGH) are disordered. A compositionally biased stretch (polar residues) spans 363–378 (QHCSDSQRTSSAMSGH). 4 positions are modified to phosphoserine: S376, S379, S381, and S384. The span at 439–451 (SETSDSSQGQDSE) shows a compositional bias: polar residues. Residues 439 to 477 (SETSDSSQGQDSESVLLVDEAGGSGRAGPAPKGSSLQVT) form a disordered region.

It belongs to the G-protein coupled receptor 1 family. As to quaternary structure, interacts with FEM1A. In terms of processing, phosphorylation mediates agonist-mediated desensitization by promoting cytoplasmic retention.

Its subcellular location is the cell membrane. In terms of biological role, receptor for prostaglandin E2 (PGE2). The activity of this receptor is mediated by G(s) proteins that stimulate adenylate cyclase. Has a relaxing effect on smooth muscle. May play an important role in regulating renal hemodynamics, intestinal epithelial transport, adrenal aldosterone secretion, and uterine function. In Pan troglodytes (Chimpanzee), this protein is Prostaglandin E2 receptor EP4 subtype (PTGER4).